The following is a 117-amino-acid chain: Ig heavy chain V region 1-62-3 (117 aa).

Residues 1–19 (MGWSCIMLFLAATATGVHF) form the signal peptide. The framework-1 stretch occupies residues 20 to 49 (QVQLQQPGAELVKPGASVKLSSKASGYTFT). Positions 50 to 54 (SYWMH) are complementarity-determining-1. The segment at 55–68 (WVKQRPGRGLEWIG) is framework-2. Residues 69–85 (RIDPNSGGTKYNEKFKS) are complementarity-determining-2. Residues 86–117 (KATLTVDKPSSTAYMQLSSLTSEDSAVYYCAR) form a framework-3 region.

This chain is Ig heavy chain V region 1-62-3 (Ighv1-62-3), found in Mus musculus (Mouse).